Reading from the N-terminus, the 462-residue chain is Fez family zinc finger protein 1 (462 aa).

The Engrailed homology 1 repressor signature appears at 34 to 49; the sequence is PLAFSIERIMSRTPEP. C2H2-type zinc fingers lie at residues 260–282, 288–310, 316–338, 344–366, 372–394, and 400–423; these read FTCE…MPVH, FVCK…KIIH, HKCN…TRIH, FVCE…KLTH, FKCN…MHTH, and FTCP…RKLH. The tract at residues 441 to 462 is disordered; it reads LLLPNREPSPTIQSPQLQKSGY. The span at 448–462 shows a compositional bias: polar residues; the sequence is PSPTIQSPQLQKSGY.

The protein belongs to the krueppel C2H2-type zinc-finger protein family.

The protein resides in the nucleus. In terms of biological role, transcription repressor. Involved in the development of the forebrain region. This Xenopus tropicalis (Western clawed frog) protein is Fez family zinc finger protein 1 (fezf1).